Here is a 271-residue protein sequence, read N- to C-terminus: Phosphate import ATP-binding protein PstB 2 (271 aa).

The disordered stretch occupies residues 1-20; the sequence is MLTKKPEINTILQTTPDPHS. The ABC transporter domain maps to 25-266; that stretch reads MATEDLHVYY…PQEKQTEDYI (242 aa). 57–64 lines the ATP pocket; that stretch reads GPSGCGKS.

Belongs to the ABC transporter superfamily. Phosphate importer (TC 3.A.1.7) family. The complex is composed of two ATP-binding proteins (PstB), two transmembrane proteins (PstC and PstA) and a solute-binding protein (PstS).

It is found in the cell membrane. It catalyses the reaction phosphate(out) + ATP + H2O = ADP + 2 phosphate(in) + H(+). In terms of biological role, part of the ABC transporter complex PstSACB involved in phosphate import. Responsible for energy coupling to the transport system. The polypeptide is Phosphate import ATP-binding protein PstB 2 (Listeria innocua serovar 6a (strain ATCC BAA-680 / CLIP 11262)).